Consider the following 466-residue polypeptide: 3-isopropylmalate dehydratase large subunit (466 aa).

Residues Cys-347, Cys-407, and Cys-410 each coordinate [4Fe-4S] cluster.

The protein belongs to the aconitase/IPM isomerase family. LeuC type 1 subfamily. Heterodimer of LeuC and LeuD. It depends on [4Fe-4S] cluster as a cofactor.

It carries out the reaction (2R,3S)-3-isopropylmalate = (2S)-2-isopropylmalate. It functions in the pathway amino-acid biosynthesis; L-leucine biosynthesis; L-leucine from 3-methyl-2-oxobutanoate: step 2/4. Catalyzes the isomerization between 2-isopropylmalate and 3-isopropylmalate, via the formation of 2-isopropylmaleate. This is 3-isopropylmalate dehydratase large subunit from Shewanella pealeana (strain ATCC 700345 / ANG-SQ1).